A 279-amino-acid chain; its full sequence is Fatty acid metabolism regulator protein (279 aa).

In terms of domain architecture, HTH gntR-type spans 6 to 74 (KSPAGFAEKY…HGKPTKVNQF (69 aa)). The segment at residues 34–53 (ERELSELIGVTRTTLREVLQ) is a DNA-binding region (H-T-H motif).

Homodimer.

It is found in the cytoplasm. In terms of biological role, multifunctional regulator of fatty acid metabolism. The polypeptide is Fatty acid metabolism regulator protein (Vibrio vulnificus (strain CMCP6)).